A 180-amino-acid polypeptide reads, in one-letter code: Large ribosomal subunit protein uL5 (180 aa).

This sequence belongs to the universal ribosomal protein uL5 family. As to quaternary structure, part of the 50S ribosomal subunit; part of the 5S rRNA/L5/L18/L25 subcomplex. Contacts the 5S rRNA and the P site tRNA. Forms a bridge to the 30S subunit in the 70S ribosome.

In terms of biological role, this is one of the proteins that bind and probably mediate the attachment of the 5S RNA into the large ribosomal subunit, where it forms part of the central protuberance. In the 70S ribosome it contacts protein S13 of the 30S subunit (bridge B1b), connecting the 2 subunits; this bridge is implicated in subunit movement. Contacts the P site tRNA; the 5S rRNA and some of its associated proteins might help stabilize positioning of ribosome-bound tRNAs. The protein is Large ribosomal subunit protein uL5 of Chlamydia trachomatis serovar A (strain ATCC VR-571B / DSM 19440 / HAR-13).